Here is a 157-residue protein sequence, read N- to C-terminus: Endoribonuclease YbeY (157 aa).

Positions 111, 115, and 121 each coordinate Zn(2+).

The protein belongs to the endoribonuclease YbeY family. It depends on Zn(2+) as a cofactor.

It is found in the cytoplasm. Its function is as follows. Single strand-specific metallo-endoribonuclease involved in late-stage 70S ribosome quality control and in maturation of the 3' terminus of the 16S rRNA. The polypeptide is Endoribonuclease YbeY (Pseudomonas putida (strain W619)).